A 219-amino-acid polypeptide reads, in one-letter code: Thymidylate kinase (219 aa).

Residue Gly7–Ser14 coordinates ATP.

Belongs to the thymidylate kinase family.

It catalyses the reaction dTMP + ATP = dTDP + ADP. Phosphorylation of dTMP to form dTDP in both de novo and salvage pathways of dTTP synthesis. The sequence is that of Thymidylate kinase from Chlorobium limicola (strain DSM 245 / NBRC 103803 / 6330).